Consider the following 264-residue polypeptide: Undecaprenyl-diphosphatase (264 aa).

7 consecutive transmembrane segments (helical) span residues 42–62 (ESLLFTVVLHFATALSTLVVF), 82–102 (TQFSLKIIISMLPAVIVGLLF), 109–129 (LFGGNILFVGFMLLITALLLW), 146–166 (AFIIGVSQAIAMLPGISRSGA), 184–204 (FSFLMVVPLIFGKIAKDLMSG), 215–235 (ILATGFIAAFLAGLVACTWMI), and 243–263 (LSWFAIYCFVVGLAAIIFAYA).

This sequence belongs to the UppP family.

Its subcellular location is the cell membrane. The catalysed reaction is di-trans,octa-cis-undecaprenyl diphosphate + H2O = di-trans,octa-cis-undecaprenyl phosphate + phosphate + H(+). Functionally, catalyzes the dephosphorylation of undecaprenyl diphosphate (UPP). Confers resistance to bacitracin. In Christiangramia forsetii (strain DSM 17595 / CGMCC 1.15422 / KT0803) (Gramella forsetii), this protein is Undecaprenyl-diphosphatase.